A 180-amino-acid chain; its full sequence is Large ribosomal subunit protein uL5 (180 aa).

The protein belongs to the universal ribosomal protein uL5 family. As to quaternary structure, part of the 50S ribosomal subunit; part of the 5S rRNA/L5/L18/L25 subcomplex. Contacts the 5S rRNA and the P site tRNA. Forms a bridge to the 30S subunit in the 70S ribosome.

This is one of the proteins that bind and probably mediate the attachment of the 5S RNA into the large ribosomal subunit, where it forms part of the central protuberance. In the 70S ribosome it contacts protein S13 of the 30S subunit (bridge B1b), connecting the 2 subunits; this bridge is implicated in subunit movement. Contacts the P site tRNA; the 5S rRNA and some of its associated proteins might help stabilize positioning of ribosome-bound tRNAs. This Ralstonia pickettii (strain 12J) protein is Large ribosomal subunit protein uL5.